Consider the following 273-residue polypeptide: 2,3,4,5-tetrahydropyridine-2,6-dicarboxylate N-succinyltransferase (273 aa).

Substrate is bound by residues Arg-104 and Asp-141.

Belongs to the transferase hexapeptide repeat family. In terms of assembly, homotrimer.

It is found in the cytoplasm. It catalyses the reaction (S)-2,3,4,5-tetrahydrodipicolinate + succinyl-CoA + H2O = (S)-2-succinylamino-6-oxoheptanedioate + CoA. The protein operates within amino-acid biosynthesis; L-lysine biosynthesis via DAP pathway; LL-2,6-diaminopimelate from (S)-tetrahydrodipicolinate (succinylase route): step 1/3. This is 2,3,4,5-tetrahydropyridine-2,6-dicarboxylate N-succinyltransferase from Neisseria meningitidis serogroup A / serotype 4A (strain DSM 15465 / Z2491).